Reading from the N-terminus, the 210-residue chain is Chaperone protein TorD (210 aa).

Belongs to the TorD/DmsD family. TorD subfamily.

It is found in the cytoplasm. In terms of biological role, involved in the biogenesis of TorA. Acts on TorA before the insertion of the molybdenum cofactor and, as a result, probably favors a conformation of the apoenzyme that is competent for acquiring the cofactor. This chain is Chaperone protein TorD, found in Salmonella agona (strain SL483).